We begin with the raw amino-acid sequence, 590 residues long: Arginine--tRNA ligase (590 aa).

A 'HIGH' region motif is present at residues 131-141 (PNIAKEMHVGH).

Belongs to the class-I aminoacyl-tRNA synthetase family. As to quaternary structure, monomer.

Its subcellular location is the cytoplasm. It catalyses the reaction tRNA(Arg) + L-arginine + ATP = L-arginyl-tRNA(Arg) + AMP + diphosphate. The polypeptide is Arginine--tRNA ligase (Synechococcus sp. (strain RCC307)).